A 308-amino-acid polypeptide reads, in one-letter code: Urease subunit beta (308 aa).

One can recognise a Urease domain in the interval 131-308 (GGIDTHIHFI…STNPTIPFTK (178 aa)). Ni(2+) is bound by residues His-136, His-138, Lys-219, His-248, and His-274. An N6-carboxylysine modification is found at Lys-219.

The protein belongs to the metallo-dependent hydrolases superfamily. Urease alpha subunit family. Heterohexamer of 3 UreA (alpha) and 3 UreB (beta) subunits. Ni cation serves as cofactor. Post-translationally, carboxylation allows a single lysine to coordinate two nickel ions.

It is found in the cytoplasm. It catalyses the reaction urea + 2 H2O + H(+) = hydrogencarbonate + 2 NH4(+). The protein operates within nitrogen metabolism; urea degradation; CO(2) and NH(3) from urea (urease route): step 1/1. This is Urease subunit beta (ureB) from Helicobacter mustelae.